We begin with the raw amino-acid sequence, 72 residues long: Translation initiation factor IF-1 (72 aa).

Residues 1–72 form the S1-like domain; that stretch reads MAKEDCIEME…TKGRIKFRSK (72 aa).

The protein belongs to the IF-1 family. Component of the 30S ribosomal translation pre-initiation complex which assembles on the 30S ribosome in the order IF-2 and IF-3, IF-1 and N-formylmethionyl-tRNA(fMet); mRNA recruitment can occur at any time during PIC assembly.

The protein resides in the cytoplasm. Functionally, one of the essential components for the initiation of protein synthesis. Stabilizes the binding of IF-2 and IF-3 on the 30S subunit to which N-formylmethionyl-tRNA(fMet) subsequently binds. Helps modulate mRNA selection, yielding the 30S pre-initiation complex (PIC). Upon addition of the 50S ribosomal subunit IF-1, IF-2 and IF-3 are released leaving the mature 70S translation initiation complex. This chain is Translation initiation factor IF-1, found in Francisella tularensis subsp. tularensis (strain WY96-3418).